We begin with the raw amino-acid sequence, 110 residues long: Flagellar hook-basal body complex protein FliE (110 aa).

The protein belongs to the FliE family.

It localises to the bacterial flagellum basal body. In Bordetella petrii (strain ATCC BAA-461 / DSM 12804 / CCUG 43448), this protein is Flagellar hook-basal body complex protein FliE.